The sequence spans 319 residues: tRNA (guanine-N(7)-)-methyltransferase (319 aa).

Residues 1 to 44 form a disordered region; that stretch reads MSESPETPEPSPAQSPEAAPEQPQAARPVTPGSQASFGTYGGRP. Positions 14–26 are enriched in low complexity; sequence QSPEAAPEQPQAA. Positions 103, 128, 155, and 178 each coordinate S-adenosyl-L-methionine. D178 is an active-site residue. Substrate contacts are provided by K182 and D214. Residues 262–288 form a disordered region; it reads APVKEGRAPVSTEHTGPNEGVDETGGW. 298–301 is a substrate binding site; the sequence is TSFE.

The protein belongs to the class I-like SAM-binding methyltransferase superfamily. TrmB family.

The enzyme catalyses guanosine(46) in tRNA + S-adenosyl-L-methionine = N(7)-methylguanosine(46) in tRNA + S-adenosyl-L-homocysteine. It functions in the pathway tRNA modification; N(7)-methylguanine-tRNA biosynthesis. Its function is as follows. Catalyzes the formation of N(7)-methylguanine at position 46 (m7G46) in tRNA. In Arthrobacter sp. (strain FB24), this protein is tRNA (guanine-N(7)-)-methyltransferase.